Consider the following 232-residue polypeptide: Enolase-phosphatase E1 (232 aa).

The protein belongs to the HAD-like hydrolase superfamily. MasA/MtnC family. Monomer. Mg(2+) serves as cofactor.

It catalyses the reaction 5-methylsulfanyl-2,3-dioxopentyl phosphate + H2O = 1,2-dihydroxy-5-(methylsulfanyl)pent-1-en-3-one + phosphate. The protein operates within amino-acid biosynthesis; L-methionine biosynthesis via salvage pathway; L-methionine from S-methyl-5-thio-alpha-D-ribose 1-phosphate: step 3/6. It functions in the pathway amino-acid biosynthesis; L-methionine biosynthesis via salvage pathway; L-methionine from S-methyl-5-thio-alpha-D-ribose 1-phosphate: step 4/6. Functionally, bifunctional enzyme that catalyzes the enolization of 2,3-diketo-5-methylthiopentyl-1-phosphate (DK-MTP-1-P) into the intermediate 2-hydroxy-3-keto-5-methylthiopentenyl-1-phosphate (HK-MTPenyl-1-P), which is then dephosphorylated to form the acireductone 1,2-dihydroxy-3-keto-5-methylthiopentene (DHK-MTPene). The protein is Enolase-phosphatase E1 of Xanthomonas oryzae pv. oryzae (strain KACC10331 / KXO85).